We begin with the raw amino-acid sequence, 172 residues long: MEHQGQHGHVTSRVDEYGNPVGTGAGHGQMGTAGMGTHGTTGGMGTHGTTGGMGTHGTTGTGGGQFQPMREEHKTGGVLQRSGSSSSSSSEDDGMGGRRKKGIKEKIKEKLPGGNKGEQQHAMGGTGGAYGQQGHGTGMTTGTTGAHGTTTTDTGEKKGIMDKIKEKLPGQH.

A disordered region spans residues 1–172 (MEHQGQHGHV…KIKEKLPGQH (172 aa)). The Type A repeat unit spans residues 3-28 (HQGQHGHVTSRVDEYGNPVGTGAGHG). A compositionally biased stretch (gly residues) spans 21-65 (VGTGAGHGQMGTAGMGTHGTTGGMGTHGTTGGMGTHGTTGTGGGQ). Residues 98–115 (RRKKGIKEKIKEKLPGGN) form a Type B repeat. Residues 124-139 (GGTGGAYGQQGHGTGM) show a composition bias toward gly residues. A Type A repeat occupies 125 to 149 (GTGGAYGQQGHGTGMTTGTTGAHGT). Over residues 140–153 (TTGTTGAHGTTTTD) the composition is skewed to low complexity. Residues 154-172 (TGEKKGIMDKIKEKLPGQH) are compositionally biased toward basic and acidic residues. The Type B repeat unit spans residues 156-172 (EKKGIMDKIKEKLPGQH).

It belongs to the plant dehydrin family.

It is found in the cytoplasm. The protein is Water stress-inducible protein Rab21 (RAB21) of Oryza sativa subsp. indica (Rice).